Consider the following 289-residue polypeptide: Protease HtpX homolog (289 aa).

Helical transmembrane passes span 9-29 (TGVL…LIGG) and 31-51 (GGMI…YWFS). Histidine 133 lines the Zn(2+) pocket. Glutamate 134 is a catalytic residue. Residue histidine 137 coordinates Zn(2+). Helical transmembrane passes span 143-163 (TLIQ…VDFA) and 182-202 (IGLI…QLAI). Position 207 (glutamate 207) interacts with Zn(2+).

It belongs to the peptidase M48B family. Zn(2+) is required as a cofactor.

It is found in the cell membrane. This Pyrococcus abyssi (strain GE5 / Orsay) protein is Protease HtpX homolog.